Consider the following 273-residue polypeptide: Homeobox protein HMX2 (273 aa).

The tract at residues 1–154 (MGSKEDVGKG…TGAAKKKTRT (154 aa)) is disordered. The span at 114-123 (PDFKEEKERL) shows a compositional bias: basic and acidic residues. Positions 149-208 (KKKTRTVFSRSQVYQLESTFDMKRYLSSSERACLASSLQLTETQVKTWFQNRRNKWKRQL) form a DNA-binding region, homeobox.

The protein belongs to the HMX homeobox family. As to expression, expressed in the developing CNS, including a specific expression in vestibular structures throughout inner ear development.

Its subcellular location is the nucleus. Transcription factor involved in specification of neuronal cell types and which is required for inner ear and hypothalamus development. The polypeptide is Homeobox protein HMX2 (Hmx2) (Mus musculus (Mouse)).